The following is a 20-amino-acid chain: Cytochrome c oxidase subunit 5B heart, mitochondrial (20 aa).

The tract at residues 1 to 20 (XXLKGIPTDEEQATGLEEYA) is disordered.

It belongs to the cytochrome c oxidase subunit 5B family. As to quaternary structure, component of the cytochrome c oxidase (complex IV, CIV), a multisubunit enzyme composed of 14 subunits. The complex is composed of a catalytic core of 3 subunits MT-CO1, MT-CO2 and MT-CO3, encoded in the mitochondrial DNA, and 11 supernumerary subunits COX4I, COX5A, COX5B, COX6A, COX6B, COX6C, COX7A, COX7B, COX7C, COX8 and NDUFA4, which are encoded in the nuclear genome. The complex exists as a monomer or a dimer and forms supercomplexes (SCs) in the inner mitochondrial membrane with NADH-ubiquinone oxidoreductase (complex I, CI) and ubiquinol-cytochrome c oxidoreductase (cytochrome b-c1 complex, complex III, CIII), resulting in different assemblies (supercomplex SCI(1)III(2)IV(1) and megacomplex MCI(2)III(2)IV(2)).

It is found in the mitochondrion inner membrane. It functions in the pathway energy metabolism; oxidative phosphorylation. Its function is as follows. Component of the cytochrome c oxidase, the last enzyme in the mitochondrial electron transport chain which drives oxidative phosphorylation. The respiratory chain contains 3 multisubunit complexes succinate dehydrogenase (complex II, CII), ubiquinol-cytochrome c oxidoreductase (cytochrome b-c1 complex, complex III, CIII) and cytochrome c oxidase (complex IV, CIV), that cooperate to transfer electrons derived from NADH and succinate to molecular oxygen, creating an electrochemical gradient over the inner membrane that drives transmembrane transport and the ATP synthase. Cytochrome c oxidase is the component of the respiratory chain that catalyzes the reduction of oxygen to water. Electrons originating from reduced cytochrome c in the intermembrane space (IMS) are transferred via the dinuclear copper A center (CU(A)) of subunit 2 and heme A of subunit 1 to the active site in subunit 1, a binuclear center (BNC) formed by heme A3 and copper B (CU(B)). The BNC reduces molecular oxygen to 2 water molecules using 4 electrons from cytochrome c in the IMS and 4 protons from the mitochondrial matrix. The chain is Cytochrome c oxidase subunit 5B heart, mitochondrial from Oncorhynchus mykiss (Rainbow trout).